Consider the following 497-residue polypeptide: Cytochrome P450 26A1 (497 aa).

Cys442 serves as a coordination point for heme.

This sequence belongs to the cytochrome P450 family. The cofactor is heme.

The protein localises to the endoplasmic reticulum membrane. It localises to the microsome membrane. The catalysed reaction is all-trans-retinoate + reduced [NADPH--hemoprotein reductase] + O2 = all-trans-(4S)-hydroxyretinoate + oxidized [NADPH--hemoprotein reductase] + H2O + H(+). The enzyme catalyses all-trans-(4S)-hydroxyretinoate + reduced [NADPH--hemoprotein reductase] + O2 = all-trans-(4S,16)-dihydroxyretinoate + oxidized [NADPH--hemoprotein reductase] + H2O + H(+). It carries out the reaction all-trans-retinoate + reduced [NADPH--hemoprotein reductase] + O2 = all-trans-18-hydroxyretinoate + oxidized [NADPH--hemoprotein reductase] + H2O + H(+). In terms of biological role, a cytochrome P450 monooxygenase involved in the metabolism of retinoates (RAs), the active metabolites of vitamin A, and critical signaling molecules in animals. RAs exist as at least four different isomers: all-trans-RA (atRA), 9-cis-RA, 13-cis-RA, and 9,13-dicis-RA, where atRA is considered to be the biologically active isomer, although 9-cis-RA and 13-cis-RA also have activity. Catalyzes the hydroxylation of atRA primarily at C-4 and C-18, thereby contributing to the regulation of atRA homeostasis and signaling. Hydroxylation of atRA limits its biological activity and initiates a degradative process leading to its eventual elimination. Involved in the convertion of atRA to all-trans-4-oxo-RA. Able to metabolize other RAs such as 9-cis, 13-cis and 9,13-di-cis RA. Can oxidize all-trans-13,14-dihydroretinoate (DRA) to metabolites which could include all-trans-4-oxo-DRA, all-trans-4-hydroxy-DRA, all-trans-5,8-epoxy-DRA, and all-trans-18-hydroxy-DRA. May play a role in the oxidative metabolism of xenobiotics such as tazarotenic acid. The polypeptide is Cytochrome P450 26A1 (Mus musculus (Mouse)).